A 422-amino-acid chain; its full sequence is Metallocarboxypeptidase A (422 aa).

A signal peptide spans 1–17; the sequence is MRSVLSLALLAANVVTA. Residues 18–112 constitute a propeptide, activation peptide; it reads AVVSPFDYSG…FEAYSAGYAP (95 aa). The Peptidase M14 domain maps to 119–419; it reads SYHSYQDHIS…AGTVAMLKAV (301 aa). 2 residues coordinate Zn(2+): His-179 and Glu-182. Substrate-binding positions include 179-182, Arg-237, and 254-255; these read HARE and NR. Cys-248 and Cys-271 are disulfide-bonded. His-309 is a Zn(2+) binding site. 310–311 is a binding site for substrate; sequence SY. The Proton donor/acceptor role is filled by Glu-385.

It belongs to the peptidase M14 family. Zn(2+) is required as a cofactor.

Its subcellular location is the secreted. In terms of biological role, extracellular metalloprotease that contributes to pathogenicity. The chain is Metallocarboxypeptidase A (MCPA) from Trichophyton tonsurans (Scalp ringworm fungus).